Reading from the N-terminus, the 92-residue chain is Bombyxin A-5 (92 aa).

The N-terminal stretch at 1–19 (MKLLLAIALMLTTVMWAST) is a signal peptide. Residue Q20 is modified to Pyrrolidone carboxylic acid. 3 disulfides stabilise this stretch: C29–C79, C41–C92, and C78–C83. A propeptide spans 50 to 71 (SDAQFASYGSAWLMPYSEGRDQ) (c peptide like).

The protein belongs to the insulin family. In terms of assembly, heterodimer of a B chain and an A chain linked by two disulfide bonds.

It localises to the secreted. Functionally, brain peptide responsible for activation of prothoracic glands to produce ecdysone in insects. The chain is Bombyxin A-5 (BBXA5) from Bombyx mori (Silk moth).